We begin with the raw amino-acid sequence, 851 residues long: DNA mismatch repair protein MutS (851 aa).

602–609 (GPNMSGKS) is an ATP binding site.

It belongs to the DNA mismatch repair MutS family.

Its function is as follows. This protein is involved in the repair of mismatches in DNA. It is possible that it carries out the mismatch recognition step. This protein has a weak ATPase activity. The polypeptide is DNA mismatch repair protein MutS (Streptococcus pyogenes serotype M28 (strain MGAS6180)).